Consider the following 117-residue polypeptide: Large ribosomal subunit protein uL18 (117 aa).

Belongs to the universal ribosomal protein uL18 family. As to quaternary structure, part of the 50S ribosomal subunit; part of the 5S rRNA/L5/L18/L25 subcomplex. Contacts the 5S and 23S rRNAs.

This is one of the proteins that bind and probably mediate the attachment of the 5S RNA into the large ribosomal subunit, where it forms part of the central protuberance. The protein is Large ribosomal subunit protein uL18 of Thioalkalivibrio sulfidiphilus (strain HL-EbGR7).